The chain runs to 235 residues: uncharacterized protein (235 aa).

Residues 1 to 24 form the signal peptide; it reads MSDRMKLKGLLAFCLLFLSSFVLA.

This is an uncharacterized protein from Haemophilus influenzae (strain ATCC 51907 / DSM 11121 / KW20 / Rd).